A 1845-amino-acid polypeptide reads, in one-letter code: Collagen alpha-1(XXVII) chain (1845 aa).

Residues 1–39 form the signal peptide; it reads MGTGFARGARGTAASGPGGGFLFAWILVSFTCHLASTQG. Residues 40–609 constitute a propeptide, N-terminal propeptide; sequence APEDVDVLQR…LGPTPFPMLM (570 aa). The 166-residue stretch at 72–237 folds into the Laminin G-like domain; sequence PSGFIFTQRA…NYCAHLRERC (166 aa). Residue N272 is glycosylated (N-linked (GlcNAc...) asparagine). Disordered stretches follow at residues 299–478, 502–572, 608–774, and 827–1608; these read TKPL…VPKT, PPLG…RPST, LMGP…MGRP, and LMGG…HPIQ. The segment covering 312 to 323 has biased composition (polar residues); sequence HSSSQTPLSPAK. Composition is skewed to low complexity over residues 327–343 and 356–372; these read RKTP…NSTR and TTTS…SVSP. N-linked (GlcNAc...) asparagine glycosylation occurs at N340. Residues 429–439 show a composition bias toward pro residues; it reads PRPPVPSPQPL. Residues 444–454 show a composition bias toward polar residues; that stretch reads GLSKKFTNPTV. The segment covering 554–564 has biased composition (basic and acidic residues); the sequence is SARDASPRDLT. Collagen-like domains are found at residues 610–664, 673–732, 742–801, 817–876, 877–936, 937–996, 997–1038, 1039–1096, 1117–1176, 1177–1236, and 1240–1299; these read GPPG…GDPG, GAKG…PGPV, GYIG…PGPP, GYPG…PGPL, GKAG…EGPM, GPPG…VGEK, GDRG…PGSR, GLPG…GAKG, GSQG…PGLE, GDHG…QGEK, and GAKG…NGHK. Positions 610–1603 are triple-helical; it reads GPPGSKGDCG…RGRPGPPGPP (994 aa). Residues 639 to 654 are compositionally biased toward pro residues; the sequence is RGPPGPYGNPGPPGPP. 2 stretches are compositionally biased toward low complexity: residues 677 to 690 and 699 to 719; these read NMGL…PGPL and PGAA…SPGA. Gly residues predominate over residues 865 to 874; it reads GLPGGRGKPG. Residues 896-909 are compositionally biased toward low complexity; it reads FPGDIGPPGDNGPE. Gly residues predominate over residues 1018–1027; sequence GTPGGIGNPG. Composition is skewed to low complexity over residues 1074–1086, 1112–1122, and 1152–1167; these read RGRP…QGAA, LPGEPGSQGPQ, and KGDL…QGLI. Basic and acidic residues-rich tracts occupy residues 1187–1212 and 1226–1238; these read LKGD…KGED and REGK…EKGQ. Composition is skewed to basic and acidic residues over residues 1311-1323 and 1335-1345; these read KGEK…DGKT and PVGDRGDRGEP. The 60-residue stretch at 1325-1384 folds into the Collagen-like 12 domain; the sequence is GPPGPPGDRGPVGDRGDRGEPGDPGYPGQEGVQGLRGEPGQQGQPGHPGPRGRPGPKGSK. 3 stretches are compositionally biased toward low complexity: residues 1360–1369, 1395–1422, and 1438–1465; these read RGEPGQQGQP, KAGP…RQGP, and PGYQ…PGVA. 3 Collagen-like domains span residues 1424–1483, 1484–1543, and 1544–1603; these read GTAG…SGLP, GQLG…KGIQ, and GPRG…PGPP. Residues 1557-1572 show a composition bias toward low complexity; that stretch reads IIGPPGMLGPSGLPGP. Residues 1588–1605 show a composition bias toward pro residues; sequence RGPPGPRGRPGPPGPPWH. The propeptide at 1607–1845 is C-terminal propeptide; the sequence is IQFQQDDLGA…RLEVGPACFL (239 aa). Residues 1645–1845 enclose the Fibrillar collagen NC1 domain; the sequence is GEIFKTLHYL…RLEVGPACFL (201 aa). 3 disulfide bridges follow: C1675–C1707, C1716–C1843, and C1752–C1796. 4 residues coordinate Ca(2+): D1693, N1695, C1698, and D1701. Residue N1754 is glycosylated (N-linked (GlcNAc...) asparagine).

The protein belongs to the fibrillar collagen family. In terms of tissue distribution, highly expressed in cartilage, eye and ear.

It is found in the secreted. Its subcellular location is the extracellular space. The protein localises to the extracellular matrix. In terms of biological role, plays a role during the calcification of cartilage and the transition of cartilage to bone. This chain is Collagen alpha-1(XXVII) chain (Col27a1), found in Mus musculus (Mouse).